Consider the following 339-residue polypeptide: tRNA dimethylallyltransferase (339 aa).

Residue 36-43 (GPTGSGKT) participates in ATP binding. Substrate is bound at residue 38–43 (TGSGKT). The interval 61-64 (DSMQ) is interaction with substrate tRNA.

This sequence belongs to the IPP transferase family. Monomer. The cofactor is Mg(2+).

The catalysed reaction is adenosine(37) in tRNA + dimethylallyl diphosphate = N(6)-dimethylallyladenosine(37) in tRNA + diphosphate. Its function is as follows. Catalyzes the transfer of a dimethylallyl group onto the adenine at position 37 in tRNAs that read codons beginning with uridine, leading to the formation of N6-(dimethylallyl)adenosine (i(6)A). This is tRNA dimethylallyltransferase from Chlamydia trachomatis serovar L2 (strain ATCC VR-902B / DSM 19102 / 434/Bu).